The primary structure comprises 58 residues: Conotoxin Ar5.4 (58 aa).

Residues 1 to 20 (RIQSDLIRAALEDADMKNEK) constitute a propeptide that is removed on maturation.

It belongs to the conotoxin T superfamily. Post-translationally, contains 2 disulfide bonds that can be either 'C1-C3, C2-C4' or 'C1-C4, C2-C3', since these disulfide connectivities have been observed for conotoxins with cysteine framework V (for examples, see AC P0DQQ7 and AC P81755). Expressed by the venom duct.

The protein localises to the secreted. In Conus arenatus (Sand-dusted cone), this protein is Conotoxin Ar5.4.